A 393-amino-acid chain; its full sequence is S-adenosylmethionine synthase 1 (393 aa).

E9 serves as a coordination point for Mg(2+). H15 is an ATP binding site. Residue E43 participates in K(+) binding. Residues E56 and Q99 each coordinate L-methionine. ATP contacts are provided by residues 167–169 (DGK), 235–238 (SGRF), D246, 252–253 (RK), A269, K273, and K277. L-methionine is bound at residue D246. K277 is a binding site for L-methionine.

The protein belongs to the AdoMet synthase family. In terms of assembly, homotetramer. Requires Mn(2+) as cofactor. Mg(2+) serves as cofactor. It depends on Co(2+) as a cofactor. The cofactor is K(+). NH4(+) is required as a cofactor. As to expression, mostly expressed in roots, and, to a lower extent, in hypocotyls and cotyledons.

Its subcellular location is the cytoplasm. It catalyses the reaction L-methionine + ATP + H2O = S-adenosyl-L-methionine + phosphate + diphosphate. It functions in the pathway amino-acid biosynthesis; S-adenosyl-L-methionine biosynthesis; S-adenosyl-L-methionine from L-methionine: step 1/1. Its activity is regulated as follows. Inhibited by products of SAMS reaction (SAM, Pi, PPi), substrate analogs (cycloleucine and ethionine), and alternative nucleotides (GTP, CTP and ADP). Strongly repressed by PPPi. Its function is as follows. Catalyzes the formation of S-adenosylmethionine from methionine and ATP. The reaction comprises two steps that are both catalyzed by the same enzyme: formation of S-adenosylmethionine (AdoMet) and triphosphate, and subsequent hydrolysis of the triphosphate. This is S-adenosylmethionine synthase 1 (SAMS1) from Catharanthus roseus (Madagascar periwinkle).